Consider the following 623-residue polypeptide: Serine/threonine-protein kinase nrc-2 (623 aa).

The segment at 1–215 (MPSTKNANGE…GLGALPPPIR (215 aa)) is disordered. Basic and acidic residues-rich tracts occupy residues 27–36 (SKDHKDRDAH) and 170–180 (LSKEPLEESKD). Residues 199 to 209 (LAAPDADGLGA) are compositionally biased toward low complexity. The 291-residue stretch at 242 to 532 (FDKIKLIGKG…ASDIKTHPFF (291 aa)) folds into the Protein kinase domain. Residues 248 to 256 (IGKGDVGKV) and K271 contribute to the ATP site. The active-site Proton acceptor is the D367. The interval 569–596 (VDISGSRQMGLKGEPLESGMVTPGENAV) is disordered.

The protein belongs to the protein kinase superfamily. Ser/Thr protein kinase family. KIN82 subfamily.

It catalyses the reaction L-seryl-[protein] + ATP = O-phospho-L-seryl-[protein] + ADP + H(+). The enzyme catalyses L-threonyl-[protein] + ATP = O-phospho-L-threonyl-[protein] + ADP + H(+). Controls entry of the cell into the asexual developmental program. Required to repress entry into the conidiation program. This chain is Serine/threonine-protein kinase nrc-2 (nrc-2), found in Neurospora crassa (strain ATCC 24698 / 74-OR23-1A / CBS 708.71 / DSM 1257 / FGSC 987).